The sequence spans 84 residues: Cytochrome b559 subunit alpha (84 aa).

Residues 22–36 (IIHSITIPSLFVSGW) form a helical membrane-spanning segment. Position 24 (His-24) interacts with heme.

It belongs to the PsbE/PsbF family. As to quaternary structure, heterodimer of an alpha subunit and a beta subunit. PSII is composed of 1 copy each of membrane proteins PsbA, PsbB, PsbC, PsbD, PsbE, PsbF, PsbH, PsbI, PsbJ, PsbK, PsbL, PsbM, PsbT, PsbX, PsbY, PsbZ, Psb30/Ycf12, at least 3 peripheral proteins of the oxygen-evolving complex and a large number of cofactors. It forms dimeric complexes. Requires heme b as cofactor.

The protein localises to the plastid. Its subcellular location is the chloroplast thylakoid membrane. Its function is as follows. This b-type cytochrome is tightly associated with the reaction center of photosystem II (PSII). PSII is a light-driven water:plastoquinone oxidoreductase that uses light energy to abstract electrons from H(2)O, generating O(2) and a proton gradient subsequently used for ATP formation. It consists of a core antenna complex that captures photons, and an electron transfer chain that converts photonic excitation into a charge separation. The sequence is that of Cytochrome b559 subunit alpha from Phaeodactylum tricornutum (strain CCAP 1055/1).